We begin with the raw amino-acid sequence, 262 residues long: Type III pantothenate kinase (262 aa).

6 to 13 serves as a coordination point for ATP; it reads DVGNTNAV. Residues Tyr-100 and 107-110 contribute to the substrate site; that span reads GADR. The Proton acceptor role is filled by Asp-109. Asp-129 provides a ligand contact to K(+). Thr-132 contributes to the ATP binding site. Thr-184 provides a ligand contact to substrate.

The protein belongs to the type III pantothenate kinase family. As to quaternary structure, homodimer. It depends on NH4(+) as a cofactor. K(+) is required as a cofactor.

The protein localises to the cytoplasm. It carries out the reaction (R)-pantothenate + ATP = (R)-4'-phosphopantothenate + ADP + H(+). It functions in the pathway cofactor biosynthesis; coenzyme A biosynthesis; CoA from (R)-pantothenate: step 1/5. In terms of biological role, catalyzes the phosphorylation of pantothenate (Pan), the first step in CoA biosynthesis. The sequence is that of Type III pantothenate kinase from Bacillus cereus (strain G9842).